The chain runs to 415 residues: Serine hydroxymethyltransferase 1 (415 aa).

Residues Leu122 and 126 to 128 (GHL) each bind (6S)-5,6,7,8-tetrahydrofolate. Lys230 is modified (N6-(pyridoxal phosphate)lysine).

Belongs to the SHMT family. As to quaternary structure, homodimer. Pyridoxal 5'-phosphate is required as a cofactor.

It is found in the cytoplasm. It carries out the reaction (6R)-5,10-methylene-5,6,7,8-tetrahydrofolate + glycine + H2O = (6S)-5,6,7,8-tetrahydrofolate + L-serine. Its pathway is one-carbon metabolism; tetrahydrofolate interconversion. It functions in the pathway amino-acid biosynthesis; glycine biosynthesis; glycine from L-serine: step 1/1. Functionally, catalyzes the reversible interconversion of serine and glycine with tetrahydrofolate (THF) serving as the one-carbon carrier. This reaction serves as the major source of one-carbon groups required for the biosynthesis of purines, thymidylate, methionine, and other important biomolecules. Also exhibits THF-independent aldolase activity toward beta-hydroxyamino acids, producing glycine and aldehydes, via a retro-aldol mechanism. The protein is Serine hydroxymethyltransferase 1 of Cupriavidus pinatubonensis (strain JMP 134 / LMG 1197) (Cupriavidus necator (strain JMP 134)).